The following is a 161-amino-acid chain: Large ribosomal subunit protein bL17 (161 aa).

The segment covering 132 to 144 (ARAKRAEDNRKAL) has biased composition (basic and acidic residues). The disordered stretch occupies residues 132-161 (ARAKRAEDNRKALEAQQAQAEAETTGETKA). Residues 145–161 (EAQQAQAEAETTGETKA) are compositionally biased toward low complexity.

Belongs to the bacterial ribosomal protein bL17 family. As to quaternary structure, part of the 50S ribosomal subunit. Contacts protein L32.

The chain is Large ribosomal subunit protein bL17 from Koribacter versatilis (strain Ellin345).